Reading from the N-terminus, the 145-residue chain is Probable disulfide formation protein (145 aa).

A helical transmembrane segment spans residues 9–28 (ENLLLLIWVQAFLALAGSLF). A disulfide bridge connects residues Cys-38 and Cys-41. 2 helical membrane-spanning segments follow: residues 43 to 62 (YQRI…AIKK) and 69 to 86 (PGLF…YHYL). Residues Cys-100 and Cys-106 are joined by a disulfide bond. The helical transmembrane segment at 115–137 (GFISIPFMAGVAFLIIFVLHLLI) threads the bilayer.

This sequence belongs to the DsbB family. BdbC subfamily.

It is found in the cell membrane. Its function is as follows. Required for disulfide bond formation in some proteins. The polypeptide is Probable disulfide formation protein (Oceanobacillus iheyensis (strain DSM 14371 / CIP 107618 / JCM 11309 / KCTC 3954 / HTE831)).